The following is a 1938-amino-acid chain: Autophagy-related protein 2 homolog A (1938 aa).

The Chorein N-terminal domain maps to 14–111 (ERVCRYLLHH…QLTLQPRRGP (98 aa)). Residues S765, S878, S892, S894, S1266, S1301, and S1309 each carry the phosphoserine modification. The segment at 1242-1272 (DLHPPPRPPSPTEIAGQKLSESPASLPSCPP) is disordered. Residues 1315 to 1359 (LFPGERSGAPPPSPPVGGPAGSLGSCSEEKEDEREEEGDGDTLDS) form a disordered region. Positions 1343–1359 (EKEDEREEEGDGDTLDS) are enriched in acidic residues. Residues 1358-1404 (DSDEFCILDAPGLGIPPRDGEPVVTQLHPGPIVVRDGYFSRPIGSTD) are WIPI-interacting. S1402 is modified (phosphoserine). Disordered regions lie at residues 1438–1476 (PHPGHRARTGLSGPRSSPSRCSGPNRPQNSWRTQGGSGR) and 1614–1657 (GETS…PSPP). Residues 1446 to 1464 (TGLSGPRSSPSRCSGPNRP) show a composition bias toward low complexity.

Belongs to the ATG2 family. Interacts with ATG9A (via C-terminus). Interacts (via WIPI-interacting region) with WDR45B/WIPI3. Interacts (via WIPI-interacting region) with WDR45/WIPI4. Interacts with TMEM41B. Interacts with VMP1.

The protein localises to the preautophagosomal structure membrane. It localises to the lipid droplet. The protein resides in the endoplasmic reticulum membrane. The enzyme catalyses a 1,2-diacyl-sn-glycero-3-phospho-L-serine(in) = a 1,2-diacyl-sn-glycero-3-phospho-L-serine(out). It carries out the reaction a 1,2-diacyl-sn-glycero-3-phosphoethanolamine(in) = a 1,2-diacyl-sn-glycero-3-phosphoethanolamine(out). Functionally, lipid transfer protein involved in autophagosome assembly. Tethers the edge of the isolation membrane (IM) to the endoplasmic reticulum (ER) and mediates direct lipid transfer from ER to IM for IM expansion. Binds to the ER exit site (ERES), which is the membrane source for autophagosome formation, and extracts phospholipids from the membrane source and transfers them to ATG9 (ATG9A or ATG9B) to the IM for membrane expansion. Lipid transfer activity is enhanced by WIPI1 and WDR45/WIPI4, which promote ATG2A-association with phosphatidylinositol 3-monophosphate (PI3P)-containing membranes. Also regulates lipid droplets morphology and distribution within the cell. This Homo sapiens (Human) protein is Autophagy-related protein 2 homolog A.